We begin with the raw amino-acid sequence, 278 residues long: Protein saf1 (278 aa).

Disordered regions lie at residues 1-43 (MLSK…RNMS), 81-210 (KKNI…DIEE), and 240-264 (QKLA…EDKD). 2 stretches are compositionally biased toward basic and acidic residues: residues 22–38 (QIKV…ERLS) and 90–103 (GRVE…AERQ). Composition is skewed to basic residues over residues 104–116 (HKPR…KNPK) and 169–183 (REKK…HHKK). The span at 186–202 (INASSAQPKSTTTTEAA) shows a compositional bias: polar residues.

It localises to the nucleus. The protein resides in the nucleolus. The sequence is that of Protein saf1 (saf1) from Schizosaccharomyces pombe (strain 972 / ATCC 24843) (Fission yeast).